Here is a 670-residue protein sequence, read N- to C-terminus: DNA ligase (670 aa).

NAD(+)-binding positions include 32 to 36, 81 to 82, and E110; these read DAYYD and SL. Catalysis depends on K112, which acts as the N6-AMP-lysine intermediate. NAD(+) contacts are provided by R133, E170, K289, and K313. C407, C410, C425, and C431 together coordinate Zn(2+). A BRCT domain is found at 590-670; that stretch reads EDELRLKGQT…ELLVFLGLAG (81 aa).

This sequence belongs to the NAD-dependent DNA ligase family. LigA subfamily. Requires Mg(2+) as cofactor. It depends on Mn(2+) as a cofactor.

The catalysed reaction is NAD(+) + (deoxyribonucleotide)n-3'-hydroxyl + 5'-phospho-(deoxyribonucleotide)m = (deoxyribonucleotide)n+m + AMP + beta-nicotinamide D-nucleotide.. In terms of biological role, DNA ligase that catalyzes the formation of phosphodiester linkages between 5'-phosphoryl and 3'-hydroxyl groups in double-stranded DNA using NAD as a coenzyme and as the energy source for the reaction. It is essential for DNA replication and repair of damaged DNA. This Shewanella denitrificans (strain OS217 / ATCC BAA-1090 / DSM 15013) protein is DNA ligase.